We begin with the raw amino-acid sequence, 257 residues long: Protein KlaA (257 aa).

Belongs to the kla operon, which is associated with cryptic tellurite resistance, and IncW plasmid fertility inhibition. The polypeptide is Protein KlaA (klaA) (Escherichia coli).